The primary structure comprises 987 residues: Ephrin type-B receptor 4 (987 aa).

Residues 1 to 15 (MELRVLLCWASLAAA) form the signal peptide. The Extracellular segment spans residues 16-539 (LEETLLNTKL…ESEGWREQLA (524 aa)). Positions 17–202 (EETLLNTKLE…FYKKCAQLTV (186 aa)) constitute an Eph LBD domain. Disulfide bonds link Cys61-Cys184 and Cys97-Cys107. N-linked (GlcNAc...) asparagine glycosylation is found at Asn203, Asn335, and Asn426. 2 Fibronectin type-III domains span residues 323–432 (PPSA…TDRE) and 436–529 (AVSD…TQLD). Residues 540-560 (LIAGTAVVGVVLVLVVIVVAV) traverse the membrane as a helical segment. Residues 561–987 (LCLRKQSNGR…GGTGGPAPQY (427 aa)) lie on the Cytoplasmic side of the membrane. A Protein kinase domain is found at 615–899 (VKIEEVIGAG…ENGGASHPLL (285 aa)). Residues 621 to 629 (IGAGEFGEV) and Lys647 each bind ATP. Catalysis depends on Asp740, which acts as the Proton acceptor. Phosphoserine is present on residues Ser769, Ser770, Ser911, and Ser943. Positions 907–971 (SAFGSVGEWL…LASVQHMKSQ (65 aa)) constitute an SAM domain. The segment at 965–987 (VQHMKSQAKPGTPGGTGGPAPQY) is disordered. Thr976 carries the post-translational modification Phosphothreonine. Residues 976-987 (TPGGTGGPAPQY) show a composition bias toward gly residues. The PDZ-binding signature appears at 985-987 (PQY). Residue Tyr987 is modified to Phosphotyrosine.

Belongs to the protein kinase superfamily. Tyr protein kinase family. Ephrin receptor subfamily. As to quaternary structure, heterotetramer upon binding of the ligand. The heterotetramer is composed of an ephrin dimer and a receptor dimer. Oligomerization is probably required to induce biological responses. Interacts with RASA1; the interaction depends on EPHB4 tyrosine-phosphorylation. In terms of processing, phosphorylated; autophosphorylation is stimulated by EFNB2. As to expression, abundantly expressed in placenta but also detected in kidney, liver, lung, pancreas, skeletal muscle and heart. Expressed in primitive and myeloid, but not lymphoid, hematopoietic cells. Also observed in cell lines derived from liver, breast, colon, lung, melanocyte and cervix.

It localises to the cell membrane. It catalyses the reaction L-tyrosyl-[protein] + ATP = O-phospho-L-tyrosyl-[protein] + ADP + H(+). In terms of biological role, receptor tyrosine kinase which binds promiscuously transmembrane ephrin-B family ligands residing on adjacent cells, leading to contact-dependent bidirectional signaling into neighboring cells. The signaling pathway downstream of the receptor is referred to as forward signaling while the signaling pathway downstream of the ephrin ligand is referred to as reverse signaling. Together with its cognate ligand/functional ligand EFNB2 it is involved in the regulation of cell adhesion and migration, and plays a central role in heart morphogenesis, angiogenesis and blood vessel remodeling and permeability. EPHB4-mediated forward signaling controls cellular repulsion and segregation from EFNB2-expressing cells. The polypeptide is Ephrin type-B receptor 4 (EPHB4) (Homo sapiens (Human)).